Consider the following 262-residue polypeptide: Shikimate dehydrogenase (NADP(+)) (262 aa).

Residues 15 to 17 (SRS) and T62 contribute to the shikimate site. Catalysis depends on K66, which acts as the Proton acceptor. Position 78 (E78) interacts with NADP(+). Shikimate is bound by residues N87 and D102. NADP(+)-binding positions include 126–130 (GAGGA), 150–155 (NRTLAR), and M214. Y216 serves as a coordination point for shikimate. G236 provides a ligand contact to NADP(+).

The protein belongs to the shikimate dehydrogenase family. As to quaternary structure, homodimer.

It catalyses the reaction shikimate + NADP(+) = 3-dehydroshikimate + NADPH + H(+). The protein operates within metabolic intermediate biosynthesis; chorismate biosynthesis; chorismate from D-erythrose 4-phosphate and phosphoenolpyruvate: step 4/7. Involved in the biosynthesis of the chorismate, which leads to the biosynthesis of aromatic amino acids. Catalyzes the reversible NADPH linked reduction of 3-dehydroshikimate (DHSA) to yield shikimate (SA). The chain is Shikimate dehydrogenase (NADP(+)) from Acinetobacter baumannii (strain ATCC 17978 / DSM 105126 / CIP 53.77 / LMG 1025 / NCDC KC755 / 5377).